Reading from the N-terminus, the 295-residue chain is G1/S-specific cyclin-D1 (295 aa).

The region spanning Leu-28–Leu-152 is the Cyclin N-terminal domain. A disordered region spans residues Gln-264–Ile-295. Lys-270 is covalently cross-linked (Glycyl lysine isopeptide (Lys-Gly) (interchain with G-Cter in ubiquitin)). Residues Glu-273–Asp-282 show a composition bias toward acidic residues. Position 286 is a phosphothreonine (Thr-286).

It belongs to the cyclin family. Cyclin D subfamily. In terms of assembly, interacts with either CDK4 or CDK6 protein kinase to form a serine/threonine kinase holoenzyme complex. The cyclin subunit imparts substrate specificity to the complex. Component of the ternary complex CCND1/CDK4/CDKN1B required for nuclear translocation and modulation of CDK4-mediated kinase activity. Interacts directly with CDKN1B. Can form similar complexes with either CDKN1A or CDKN2A. Interacts with UHRF2; the interaction ubiquitinates CCND1 and appears to occur independently of phosphorylation. Interacts with USP2. Interacts (via cyclin N-terminal domain) with INSM1 (via N-terminal region); the interaction competes with the binding of CCND1 to CDK4 during cell cycle progression and inhibits CDK4 activity. Interacts with CDK4; the interaction is prevented with the binding of CCND1 to INSM1 during cell cycle progression. Post-translationally, phosphorylation at Thr-286 by MAP kinases is required for ubiquitination and degradation by the DCX(AMBRA1) complex. It also plays an essential role for recognition by the FBXO31 component of SCF (SKP1-cullin-F-box) protein ligase complex following DNA damage. In terms of processing, ubiquitinated at Lys-270 by the DCX(AMBRA1) complex during the transition from G1 to S cell phase, leading to its degradation: ubiquitination is dependent on Thr-286 phosphorylation. The DCX(AMBRA1) complex represents the major regulator of CCND1 stability during the G1/S transition. Also ubiquitinated by the SCF(FBXO4) and Cul7-RING(FBXW8) ubiquitin-protein ligase complexes. Following DNA damage it is ubiquitinated by the SCF(FBXO31) protein ligase complex. SCF(FBXO31) ubiquitination is dependent on Thr-286 phosphorylation. Ubiquitinated also by UHRF2 apparently in a phosphorylation-independent manner. Ubiquitination leads to its degradation and G1 arrest. Deubiquitinated by USP2; leading to its stabilization.

The protein localises to the nucleus. Its subcellular location is the cytoplasm. It is found in the nucleus membrane. Its function is as follows. Regulatory component of the cyclin D1-CDK4 (DC) complex that phosphorylates and inhibits members of the retinoblastoma (RB) protein family including RB1 and regulates the cell-cycle during G(1)/S transition. Phosphorylation of RB1 allows dissociation of the transcription factor E2F from the RB/E2F complex and the subsequent transcription of E2F target genes which are responsible for the progression through the G(1) phase. Hypophosphorylates RB1 in early G(1) phase. Cyclin D-CDK4 complexes are major integrators of various mitogenenic and antimitogenic signals. Also a substrate for SMAD3, phosphorylating SMAD3 in a cell-cycle-dependent manner and repressing its transcriptional activity. Component of the ternary complex, cyclin D1/CDK4/CDKN1B, required for nuclear translocation and activity of the cyclin D-CDK4 complex. Exhibits transcriptional corepressor activity with INSM1 on the NEUROD1 and INS promoters in a cell cycle-independent manner. This Bos taurus (Bovine) protein is G1/S-specific cyclin-D1 (CCND1).